A 130-amino-acid chain; its full sequence is Small ribosomal subunit protein uS9 (130 aa).

This sequence belongs to the universal ribosomal protein uS9 family.

In Variovorax paradoxus (strain S110), this protein is Small ribosomal subunit protein uS9.